The chain runs to 215 residues: Nucleoside triphosphate pyrophosphatase (215 aa).

Belongs to the Maf family. It depends on a divalent metal cation as a cofactor.

The protein localises to the cytoplasm. It carries out the reaction a ribonucleoside 5'-triphosphate + H2O = a ribonucleoside 5'-phosphate + diphosphate + H(+). The catalysed reaction is a 2'-deoxyribonucleoside 5'-triphosphate + H2O = a 2'-deoxyribonucleoside 5'-phosphate + diphosphate + H(+). In terms of biological role, nucleoside triphosphate pyrophosphatase. May have a dual role in cell division arrest and in preventing the incorporation of modified nucleotides into cellular nucleic acids. In Rickettsia conorii (strain ATCC VR-613 / Malish 7), this protein is Nucleoside triphosphate pyrophosphatase.